The following is a 129-amino-acid chain: MKYFVVALALVAAFACIAESKPAESEHELAEVEEENELADLEDAVWLEDLADLSDLEETRGFFGNAWKKIKGKAEKFFRKKAAKIIAKKEGITKEEAEAKVDTMSKKQIKVYLLKHYGKKALQKASEKL.

The N-terminal stretch at 1–20 (MKYFVVALALVAAFACIAES) is a signal peptide. Residues 21 to 60 (KPAESEHELAEVEEENELADLEDAVWLEDLADLSDLEETR) constitute a propeptide that is removed on maturation.

Belongs to the cationic peptide 06 (cytoinsectotoxin) family. Expressed by the venom gland.

It localises to the secreted. Functionally, insecticidal, cytolytic and antimicrobial peptide. Has insecticidal activity against the flesh fly S.carnaria. Has antibacterial activity against the Gram-negative bacteria E.coli. Forms voltage-dependent, ion-permeable channels in membranes. At high concentration causes cell membrane lysis. This Lachesana tarabaevi (Spider) protein is M-zodatoxin-Lt8h (cit 1-11).